We begin with the raw amino-acid sequence, 111 residues long: Probable 4-amino-4-deoxy-L-arabinose-phosphoundecaprenol flippase subunit ArnE (111 aa).

A run of 3 helical transmembrane segments spans residues I36 to L56, V61 to A81, and P88 to G108. In terms of domain architecture, EamA spans L40 to S109.

The protein belongs to the ArnE family. In terms of assembly, heterodimer of ArnE and ArnF.

It is found in the cell inner membrane. The protein operates within bacterial outer membrane biogenesis; lipopolysaccharide biosynthesis. Its function is as follows. Translocates 4-amino-4-deoxy-L-arabinose-phosphoundecaprenol (alpha-L-Ara4N-phosphoundecaprenol) from the cytoplasmic to the periplasmic side of the inner membrane. The polypeptide is Probable 4-amino-4-deoxy-L-arabinose-phosphoundecaprenol flippase subunit ArnE (Shigella flexneri serotype 5b (strain 8401)).